An 890-amino-acid polypeptide reads, in one-letter code: Genome polyprotein 2 (890 aa).

The Peptidase C6 domain maps to 135 to 255 (AFNFAHGYCY…NSDLLNGIVG (121 aa)). Residues C143 and H215 each act as for helper component proteinase activity in the active site. The segment at 506 to 533 (FTTSGDDDSPPPPGDSPSRPPGRSPDRV) is disordered. Over residues 515–528 (PPPPGDSPSRPPGR) the composition is skewed to pro residues. Residues 788-816 (ELVQRSMTKLDKEIELFQAQIDSQRRAVT) are a coiled coil.

This sequence belongs to the bymoviruses polyprotein 2 family. In terms of processing, the viral RNA2 of bymoviruses is expressed as a single polyprotein which undergoes post-translational proteolytic processing resulting in the production of at least two individual proteins. The HC-pro cleaves its C-terminus autocatalytically (Potential).

The catalysed reaction is Hydrolyzes a Gly-|-Gly bond at its own C-terminus, commonly in the sequence -Tyr-Xaa-Val-Gly-|-Gly, in the processing of the potyviral polyprotein.. The polypeptide is Genome polyprotein 2 (Hordeum vulgare (Barley)).